Here is a 739-residue protein sequence, read N- to C-terminus: UPF0313 protein YgiQ (739 aa).

One can recognise a Radical SAM core domain in the interval Ala-372–Ala-650. Cys-386, Cys-390, and Cys-393 together coordinate [4Fe-4S] cluster. A disordered region spans residues Arg-685–Arg-739. Residues Met-704 to Pro-724 show a composition bias toward polar residues. The segment covering Ala-729–Arg-739 has biased composition (basic residues).

The protein belongs to the UPF0313 family. [4Fe-4S] cluster is required as a cofactor.

This is UPF0313 protein YgiQ from Shigella flexneri.